Consider the following 65-residue polypeptide: Toxin KTx8 (65 aa).

The first 25 residues, 1 to 25, serve as a signal peptide directing secretion; sequence MNKVCFVVVLVLFVALAAYVSPIEG. 3 disulfide bridges follow: Cys-31–Cys-53, Cys-38–Cys-61, and Cys-42–Cys-63.

Belongs to the short scorpion toxin superfamily. Potassium channel inhibitor family. Alpha-KTx 11 subfamily. In terms of tissue distribution, expressed by the venom gland.

Its subcellular location is the secreted. This recombinant toxin inhibits the mammalian voltage-gated potassium channels Kv1.3/KCNA3 in vitro with an IC(50) of 26.40 nM. The polypeptide is Toxin KTx8 (Lychas mucronatus (Chinese swimming scorpion)).